Reading from the N-terminus, the 380-residue chain is Histidinol-phosphate aminotransferase (380 aa).

At Lys-235 the chain carries N6-(pyridoxal phosphate)lysine.

This sequence belongs to the class-II pyridoxal-phosphate-dependent aminotransferase family. Histidinol-phosphate aminotransferase subfamily. Homodimer. Pyridoxal 5'-phosphate is required as a cofactor.

The catalysed reaction is L-histidinol phosphate + 2-oxoglutarate = 3-(imidazol-4-yl)-2-oxopropyl phosphate + L-glutamate. It participates in amino-acid biosynthesis; L-histidine biosynthesis; L-histidine from 5-phospho-alpha-D-ribose 1-diphosphate: step 7/9. The sequence is that of Histidinol-phosphate aminotransferase from Rhodococcus opacus (strain B4).